Reading from the N-terminus, the 335-residue chain is Avermitilol synthase (335 aa).

The Mg(2+) site is built by Asp-80, Asp-84, Asn-219, Ser-223, and Glu-227. A DDXXD motif motif is present at residues 80–84 (DDQFD).

It belongs to the terpene synthase family. Requires Mg(2+) as cofactor.

The catalysed reaction is (2E,6E)-farnesyl diphosphate + H2O = avermitilol + diphosphate. Functionally, catalyzes the cyclization of farnesyl diphosphate to avermitilol. The protein is Avermitilol synthase (tpc1) of Streptomyces avermitilis (strain ATCC 31267 / DSM 46492 / JCM 5070 / NBRC 14893 / NCIMB 12804 / NRRL 8165 / MA-4680).